A 105-amino-acid polypeptide reads, in one-letter code: DNA-directed RNA polymerase subunit omega (105 aa).

The protein belongs to the RNA polymerase subunit omega family. In terms of assembly, the RNAP catalytic core consists of 2 alpha, 1 beta, 1 beta' and 1 omega subunit. When a sigma factor is associated with the core the holoenzyme is formed, which can initiate transcription.

It carries out the reaction RNA(n) + a ribonucleoside 5'-triphosphate = RNA(n+1) + diphosphate. In terms of biological role, promotes RNA polymerase assembly. Latches the N- and C-terminal regions of the beta' subunit thereby facilitating its interaction with the beta and alpha subunits. The protein is DNA-directed RNA polymerase subunit omega of Streptococcus equi subsp. zooepidemicus (strain MGCS10565).